A 307-amino-acid chain; its full sequence is MFDQATSMGDGIAEDRNHCGSNSLCRDRGRESKSRTEVGNRSPVQSSTDTPGTSASTPTSSSEDGHDKLLGVDPDYCRRILVRDAKGTIREIVLPKGLDLDRPKRTRTSFTAEQLYRLELEFQRCQYVVGRERTELARQLNLSETQVKVWFQNRRTKQKKDQTKDTDKRSSSTSESLATCNILRLLEQGRLLSVPAPPPNPLLAHPHPGNGSLLGSPSVSTSSGVSSSTTPPGAGSGTFGLSLSSLSGTPPSPRLGVPPPSLCFTMPLLSGAHHELPSGYGCGTSAFEPYMRIERKDGELGGKKTVS.

Disordered stretches follow at residues 1–70 (MFDQ…DKLL), 155–175 (RTKQ…STSE), and 197–254 (PPPN…PSPR). Residues 25–38 (CRDRGRESKSRTEV) are compositionally biased toward basic and acidic residues. Over residues 46-62 (SSTDTPGTSASTPTSSS) the composition is skewed to low complexity. Positions 103 to 162 (PKRTRTSFTAEQLYRLELEFQRCQYVVGRERTELARQLNLSETQVKVWFQNRRTKQKKDQ) form a DNA-binding region, homeobox. Positions 159–170 (KKDQTKDTDKRS) are enriched in basic and acidic residues. Low complexity predominate over residues 202-249 (LLAHPHPGNGSLLGSPSVSTSSGVSSSTTPPGAGSGTFGLSLSSLSGT).

It belongs to the EMX homeobox family. In terms of tissue distribution, expressed in the anterior neural keel and later in the preoptic area, optic stalk and ventral retina.

The protein resides in the nucleus. Its function is as follows. Transcription factor that may function in dorsoventral specification of the forebrain. Required for closure of the choroid fissure and together with vax1 is required for optic nerve differentiation and to limit retinal development to the optic cup. The sequence is that of Ventral anterior homeobox 2 (vax2) from Danio rerio (Zebrafish).